The sequence spans 346 residues: Methionine import ATP-binding protein MetN 1 (346 aa).

An ABC transporter domain is found at 2 to 241 (IELKNVSKVF…PQHVTTKKFV (240 aa)). Residue 38-45 (GYSGAGKS) participates in ATP binding.

This sequence belongs to the ABC transporter superfamily. Methionine importer (TC 3.A.1.24) family. In terms of assembly, the complex is composed of two ATP-binding proteins (MetN), two transmembrane proteins (MetI) and a solute-binding protein (MetQ).

Its subcellular location is the cell membrane. The enzyme catalyses L-methionine(out) + ATP + H2O = L-methionine(in) + ADP + phosphate + H(+). It catalyses the reaction D-methionine(out) + ATP + H2O = D-methionine(in) + ADP + phosphate + H(+). Part of the ABC transporter complex MetNIQ involved in methionine import. Responsible for energy coupling to the transport system. The protein is Methionine import ATP-binding protein MetN 1 of Bacillus cereus (strain ATCC 10987 / NRS 248).